The primary structure comprises 290 residues: Elongation factor Ts (290 aa).

The tract at residues 80 to 83 (TDFV) is involved in Mg(2+) ion dislocation from EF-Tu.

It belongs to the EF-Ts family.

It localises to the cytoplasm. Its function is as follows. Associates with the EF-Tu.GDP complex and induces the exchange of GDP to GTP. It remains bound to the aminoacyl-tRNA.EF-Tu.GTP complex up to the GTP hydrolysis stage on the ribosome. The polypeptide is Elongation factor Ts (Neorickettsia sennetsu (strain ATCC VR-367 / Miyayama) (Ehrlichia sennetsu)).